A 232-amino-acid chain; its full sequence is 7-cyano-7-deazaguanine synthase (232 aa).

8–18 is an ATP binding site; sequence FSGGQDSTTCL. Cys-187, Cys-196, Cys-199, and Cys-202 together coordinate Zn(2+).

It belongs to the QueC family. It depends on Zn(2+) as a cofactor.

It carries out the reaction 7-carboxy-7-deazaguanine + NH4(+) + ATP = 7-cyano-7-deazaguanine + ADP + phosphate + H2O + H(+). It functions in the pathway purine metabolism; 7-cyano-7-deazaguanine biosynthesis. Functionally, catalyzes the ATP-dependent conversion of 7-carboxy-7-deazaguanine (CDG) to 7-cyano-7-deazaguanine (preQ(0)). This is 7-cyano-7-deazaguanine synthase from Vibrio campbellii (strain ATCC BAA-1116).